Consider the following 185-residue polypeptide: Peptidyl-tRNA hydrolase (185 aa).

Tyr14 serves as a coordination point for tRNA. Catalysis depends on His19, which acts as the Proton acceptor. 3 residues coordinate tRNA: Tyr65, Asn67, and Asn113.

Belongs to the PTH family. In terms of assembly, monomer.

The protein localises to the cytoplasm. The catalysed reaction is an N-acyl-L-alpha-aminoacyl-tRNA + H2O = an N-acyl-L-amino acid + a tRNA + H(+). Hydrolyzes ribosome-free peptidyl-tRNAs (with 1 or more amino acids incorporated), which drop off the ribosome during protein synthesis, or as a result of ribosome stalling. Functionally, catalyzes the release of premature peptidyl moieties from peptidyl-tRNA molecules trapped in stalled 50S ribosomal subunits, and thus maintains levels of free tRNAs and 50S ribosomes. The chain is Peptidyl-tRNA hydrolase from Rickettsia bellii (strain OSU 85-389).